The following is a 316-amino-acid chain: N-acetylmuramic acid 6-phosphate etherase (316 aa).

The interval 1-25 (MAVFDPDLQPSSDRGHLLTEQSNQR) is disordered. One can recognise an SIS domain in the interval 66 to 229 (VANRLRAGGR…STAVMVKLGK (164 aa)). Catalysis depends on Glu-94, which acts as the Proton donor. The active site involves Glu-125.

Belongs to the GCKR-like family. MurNAc-6-P etherase subfamily. In terms of assembly, homodimer.

It carries out the reaction N-acetyl-D-muramate 6-phosphate + H2O = N-acetyl-D-glucosamine 6-phosphate + (R)-lactate. Its pathway is amino-sugar metabolism; N-acetylmuramate degradation. Specifically catalyzes the cleavage of the D-lactyl ether substituent of MurNAc 6-phosphate, producing GlcNAc 6-phosphate and D-lactate. The chain is N-acetylmuramic acid 6-phosphate etherase from Synechococcus sp. (strain CC9605).